Consider the following 254-residue polypeptide: Glucosamine-6-phosphate deaminase (254 aa).

The active-site Proton acceptor; for enolization step is the Asp-65. The For ring-opening step role is filled by Asn-134. The Proton acceptor; for ring-opening step role is filled by His-136. The For ring-opening step role is filled by Glu-141.

The protein belongs to the glucosamine/galactosamine-6-phosphate isomerase family. NagB subfamily.

The catalysed reaction is alpha-D-glucosamine 6-phosphate + H2O = beta-D-fructose 6-phosphate + NH4(+). It functions in the pathway amino-sugar metabolism; N-acetylneuraminate degradation; D-fructose 6-phosphate from N-acetylneuraminate: step 5/5. Functionally, catalyzes the reversible isomerization-deamination of glucosamine 6-phosphate (GlcN6P) to form fructose 6-phosphate (Fru6P) and ammonium ion. This chain is Glucosamine-6-phosphate deaminase, found in Corynebacterium aurimucosum (strain ATCC 700975 / DSM 44827 / CIP 107346 / CN-1) (Corynebacterium nigricans).